A 920-amino-acid chain; its full sequence is Isoleucine--tRNA ligase (920 aa).

The 'HIGH' region motif lies at 58–68 (PYANGHLHLGH). Glutamate 569 serves as a coordination point for L-isoleucyl-5'-AMP. The 'KMSKS' region motif lies at 610–614 (KMSKS). Lysine 613 is an ATP binding site. Cysteine 895, cysteine 898, cysteine 910, and cysteine 913 together coordinate Zn(2+).

Belongs to the class-I aminoacyl-tRNA synthetase family. IleS type 1 subfamily. As to quaternary structure, monomer. Zn(2+) serves as cofactor.

The protein resides in the cytoplasm. The catalysed reaction is tRNA(Ile) + L-isoleucine + ATP = L-isoleucyl-tRNA(Ile) + AMP + diphosphate. Its function is as follows. Catalyzes the attachment of isoleucine to tRNA(Ile). As IleRS can inadvertently accommodate and process structurally similar amino acids such as valine, to avoid such errors it has two additional distinct tRNA(Ile)-dependent editing activities. One activity is designated as 'pretransfer' editing and involves the hydrolysis of activated Val-AMP. The other activity is designated 'posttransfer' editing and involves deacylation of mischarged Val-tRNA(Ile). The polypeptide is Isoleucine--tRNA ligase (Helicobacter pylori (strain G27)).